The sequence spans 497 residues: Serine hydroxymethyltransferase (497 aa).

Residues Leu176 and 180 to 182 each bind (6S)-5,6,7,8-tetrahydrofolate; that span reads GHL. Lys289 carries the N6-(pyridoxal phosphate)lysine modification.

Belongs to the SHMT family. Homodimer. It depends on pyridoxal 5'-phosphate as a cofactor.

It is found in the cytoplasm. It carries out the reaction (6R)-5,10-methylene-5,6,7,8-tetrahydrofolate + glycine + H2O = (6S)-5,6,7,8-tetrahydrofolate + L-serine. It participates in one-carbon metabolism; tetrahydrofolate interconversion. The protein operates within amino-acid biosynthesis; glycine biosynthesis; glycine from L-serine: step 1/1. In terms of biological role, catalyzes the reversible interconversion of serine and glycine with tetrahydrofolate (THF) serving as the one-carbon carrier. This reaction serves as the major source of one-carbon groups required for the biosynthesis of purines, thymidylate, methionine, and other important biomolecules. Also exhibits THF-independent aldolase activity toward beta-hydroxyamino acids, producing glycine and aldehydes, via a retro-aldol mechanism. The chain is Serine hydroxymethyltransferase from Chlamydia trachomatis serovar A (strain ATCC VR-571B / DSM 19440 / HAR-13).